The chain runs to 165 residues: Large ribosomal subunit protein uL30 (165 aa).

The protein belongs to the universal ribosomal protein uL30 family. Part of the 50S ribosomal subunit.

The sequence is that of Large ribosomal subunit protein uL30 from Thermoplasma acidophilum (strain ATCC 25905 / DSM 1728 / JCM 9062 / NBRC 15155 / AMRC-C165).